The following is a 162-amino-acid chain: Beta-lactoglobulin-1 (162 aa).

2 disulfides stabilise this stretch: Cys66–Cys160 and Cys106–Cys119.

It belongs to the calycin superfamily. Lipocalin family. As to quaternary structure, monomer. Synthesized in mammary gland and secreted in milk.

It localises to the secreted. In terms of biological role, primary component of whey, it binds retinol and is probably involved in the transport of that molecule. The sequence is that of Beta-lactoglobulin-1 (LGB1) from Equus asinus (Donkey).